A 382-amino-acid polypeptide reads, in one-letter code: PPE family protein PPE44 (382 aa).

This sequence belongs to the mycobacterial PPE family.

The protein resides in the secreted. It localises to the cell wall. Its subcellular location is the cell surface. In terms of biological role, virulence factor that modulates host innate immune response. The chain is PPE family protein PPE44 from Mycobacterium tuberculosis (strain CDC 1551 / Oshkosh).